The chain runs to 129 residues: Small ribosomal subunit protein uS9 (129 aa).

This sequence belongs to the universal ribosomal protein uS9 family.

The polypeptide is Small ribosomal subunit protein uS9 (Helicobacter pylori (strain Shi470)).